Reading from the N-terminus, the 967-residue chain is Aminopeptidase N (967 aa).

Residues 1 to 8 are Cytoplasmic-facing; sequence MAKGFYIS. A helical; Signal-anchor for type II membrane protein membrane pass occupies residues 9–32; it reads KPVGILAILLGVAAVCTIIALSVV. A cytosolic Ser/Thr-rich junction region spans residues 33–66; that stretch reads YSQEKNRSTESSTAASTAAPTGPTTTVATTLDQS. Over 33–967 the chain is Extracellular; sequence YSQEKNRSTE…VVLRWFTENS (935 aa). The N-linked (GlcNAc...) asparagine glycan is linked to Asn-38. The segment at 41–61 is disordered; the sequence is TESSTAASTAAPTGPTTTVAT. Positions 67–967 are metalloprotease; it reads KPWNVYRLPK…VVLRWFTENS (901 aa). Residues Asn-84 and Asn-126 are each glycosylated (N-linked (GlcNAc...) asparagine). Tyr-175 bears the Sulfotyrosine mark. 2 N-linked (GlcNAc...) asparagine glycosylation sites follow: Asn-233 and Asn-338. 351-355 serves as a coordination point for substrate; it reads GAMEN. Residue His-387 coordinates Zn(2+). Glu-388 functions as the Proton acceptor in the catalytic mechanism. Zn(2+) contacts are provided by His-391 and Glu-410. Sulfotyrosine is present on Tyr-418. Residues Asn-626, Asn-682, and Asn-740 are each glycosylated (N-linked (GlcNAc...) asparagine). The interaction with FCoV and TGEV spike glycoprotein stretch occupies residues 670–840; it reads ASAQKVPVTL…GALACSNQVW (171 aa). 2 cysteine pairs are disulfide-bonded: Cys-762/Cys-769 and Cys-799/Cys-835.

The protein belongs to the peptidase M1 family. In terms of assembly, homodimer. Interacts with SLC6A19. (Microbial infection) Interacts with FCoV, CCoV, TGEV and HCoV-229E spike glycoprotein. The cofactor is Zn(2+). Sulfated. In terms of processing, N- and O-glycosylated. Post-translationally, may undergo proteolysis and give rise to a soluble form.

Its subcellular location is the cell membrane. The catalysed reaction is Release of an N-terminal amino acid, Xaa-|-Yaa- from a peptide, amide or arylamide. Xaa is preferably Ala, but may be most amino acids including Pro (slow action). When a terminal hydrophobic residue is followed by a prolyl residue, the two may be released as an intact Xaa-Pro dipeptide.. In terms of biological role, broad specificity aminopeptidase which plays a role in the final digestion of peptides generated from hydrolysis of proteins by gastric and pancreatic proteases. Also involved in the processing of various peptides including peptide hormones, such as angiotensin III and IV, neuropeptides, and chemokines. May also be involved the cleavage of peptides bound to major histocompatibility complex class II molecules of antigen presenting cells. May have a role in angiogenesis and promote cholesterol crystallization. May have a role in amino acid transport by acting as binding partner of amino acid transporter SLC6A19 and regulating its activity. Its function is as follows. (Microbial infection) In case of feline coronavirus (FCoV) infection, serves as a receptor for FCoV spike glycoprotein. It is as well a receptor for other serogroup I coronaviruses, like canine coronavirus (CCoV), porcine transmissible gastroenteritis virus (TGEV), and human coronavirus 229E (HCoV-229E). Also serves as a receptor for infectious bronchitis virus (IBV, Arkansas 99 serotype) in serogroup III. The protein is Aminopeptidase N (ANPEP) of Felis catus (Cat).